The following is a 583-amino-acid chain: Putative fatty-acid--CoA ligase fadD25 (583 aa).

The next 3 helical transmembrane spans lie at Tyr77–Pro97, Val109–Val129, and Phe229–Ile249. The interval Ile353–Thr375 is disordered.

This sequence belongs to the ATP-dependent AMP-binding enzyme family.

It localises to the cell membrane. The polypeptide is Putative fatty-acid--CoA ligase fadD25 (fadD25) (Mycobacterium tuberculosis (strain CDC 1551 / Oshkosh)).